Reading from the N-terminus, the 212-residue chain is Ras-related protein Rab-2A (212 aa).

Ala2 carries the post-translational modification N-acetylalanine. The tract at residues 2–19 (AYAYLFKYIIIGDTGVGK) is required for interaction with PRKCI. GTP is bound by residues Gly16, Val17, Gly18, Lys19, Ser20, Cys21, and Thr38. A Mg(2+)-binding site is contributed by Ser20. Residues 37–42 (LTIGVE) carry the Switch 1 motif. Residues Thr38 and Asp61 each contribute to the Mg(2+) site. Positions 63–72 (AGQESFRSIT) match the Switch 2 motif. Positions 64, 119, 120, 122, 150, and 151 each coordinate GTP. Residues Cys211 and Cys212 are each lipidated (S-geranylgeranyl cysteine).

Belongs to the small GTPase superfamily. Rab family. In terms of assembly, interacts with PRKCI. Interacts with TRIP11. Interacts (in GTP-bound form) with GARIN1B. Interacts (GTP-bound) with HOPS complex component VPS39; interaction contributes to obtaining a functional HOPS complex that promotes autophagosome-lysosome membrane fusion driven by STX17-SNAP29-VAMP8. May interact with VPS41. Mg(2+) serves as cofactor. Post-translationally, prenylated. Prenylation is required for association with cellular membranes. As to expression, brain and parietal cells.

The protein localises to the endoplasmic reticulum-Golgi intermediate compartment membrane. It is found in the melanosome. Its subcellular location is the endoplasmic reticulum membrane. The protein resides in the golgi apparatus membrane. It localises to the cytoplasmic vesicle. The protein localises to the secretory vesicle. It is found in the acrosome. Its subcellular location is the autophagosome membrane. It carries out the reaction GTP + H2O = GDP + phosphate + H(+). Regulated by guanine nucleotide exchange factors (GEFs) which promote the exchange of bound GDP for free GTP, GTPase activating proteins (GAPs) which increase the GTP hydrolysis activity, and GDP dissociation inhibitors (GDIs) which inhibit the dissociation of the nucleotide from the GTPase. In terms of biological role, the small GTPases Rab are key regulators of intracellular membrane trafficking, from the formation of transport vesicles to their fusion with membranes. Rabs cycle between active GTP-bound and inactive GDP-bound states. In their active state, drive transport of vesicular carriers from donor organelles to acceptor organelles to regulate the membrane traffic that maintains organelle identity and morphology. RAB2A regulates autophagy by promoting autophagosome-lysosome fusion via recruitment of the HOPS endosomal tethering complex; this process involves autophagosomal RAB2A and lysosomal RAB39A recruitment of HOPS subcomplexes VPS39-VPS11 and VPS41-VPS16-VPS18-VPS33A, respectively, which assemble into a functional complex to mediate membrane tethering and SNAREs-driven membrane fusion. Required for protein transport from the endoplasmic reticulum to the Golgi complex. Regulates the compacted morphology of the Golgi. Together with RAB2B, redundantly required for efficient autophagic flux. The chain is Ras-related protein Rab-2A (RAB2A) from Oryctolagus cuniculus (Rabbit).